The following is a 154-amino-acid chain: Transcriptional repressor NrdR (154 aa).

The segment at 3–34 (CPFCRHPDSRVVDSRETDEGQAIRRRRSCPEC) is a zinc-finger region. The ATP-cone domain maps to 46–136 (LAVVKRSGVT…VYRSFSSAED (91 aa)).

It belongs to the NrdR family. It depends on Zn(2+) as a cofactor.

Its function is as follows. Negatively regulates transcription of bacterial ribonucleotide reductase nrd genes and operons by binding to NrdR-boxes. In Mycolicibacterium gilvum (strain PYR-GCK) (Mycobacterium gilvum (strain PYR-GCK)), this protein is Transcriptional repressor NrdR.